The chain runs to 416 residues: D-amino acid dehydrogenase (416 aa).

FAD is bound at residue Ile-3 to Tyr-17.

Belongs to the DadA oxidoreductase family. FAD serves as cofactor.

It catalyses the reaction a D-alpha-amino acid + A + H2O = a 2-oxocarboxylate + AH2 + NH4(+). Its function is as follows. Oxidative deamination of D-amino acids. This Brucella suis biovar 1 (strain 1330) protein is D-amino acid dehydrogenase.